Reading from the N-terminus, the 130-residue chain is Small ribosomal subunit protein uS9 (130 aa).

This sequence belongs to the universal ribosomal protein uS9 family.

The chain is Small ribosomal subunit protein uS9 from Brevibacillus brevis (strain 47 / JCM 6285 / NBRC 100599).